A 127-amino-acid chain; its full sequence is Small ribosomal subunit protein uS11 (127 aa).

The protein belongs to the universal ribosomal protein uS11 family. Part of the 30S ribosomal subunit. Interacts with proteins S7 and S18. Binds to IF-3.

Its function is as follows. Located on the platform of the 30S subunit, it bridges several disparate RNA helices of the 16S rRNA. Forms part of the Shine-Dalgarno cleft in the 70S ribosome. This chain is Small ribosomal subunit protein uS11, found in Streptococcus mutans serotype c (strain ATCC 700610 / UA159).